We begin with the raw amino-acid sequence, 3075 residues long: Laminin subunit alpha-1 (3075 aa).

Residues M1–C17 form the signal peptide. Residues R18–M269 enclose the Laminin N-terminal domain. Intrachain disulfides connect C270-C279, C272-C290, C292-C301, C304-C324, C327-C336, C329-C361, C364-C373, C376-C394, C397-C409, C399-C427, C429-C438, C441-C451, C454-C467, C456-C471, C473-C482, and C485-C500. Laminin EGF-like domains lie at C270–A326, C327–P396, C397–S453, and C454–E502. A Laminin EGF-like 5; first part domain is found at C503–C512. One can recognise a Laminin IV type A 1 domain in the interval S516 to H708. An N-linked (GlcNAc...) asparagine glycan is attached at N665. One can recognise a Laminin EGF-like 5; second part domain in the interval C709–P741. 32 disulfide bridges follow: C742–C751, C744–C757, C760–C769, C772–C788, C791–C806, C793–C816, C819–C828, C831–C846, C849–C863, C851–C870, C873–C882, C885–C899, C902–C914, C904–C921, C923–C932, C935–C948, C951–C963, C953–C969, C971–C980, C983–C995, C998–C1007, C1000–C1014, C1016–C1025, C1028–C1041, C1044–C1056, C1046–C1063, C1065–C1074, C1077–C1087, C1090–C1102, C1092–C1118, C1120–C1129, and C1132–C1147. 8 Laminin EGF-like domains span residues C742–P790, C791–P848, C849–A901, C902–P950, C951–P997, C998–A1043, C1044–P1089, and C1090–P1149. The region spanning C1150–C1159 is the Laminin EGF-like 14; first part domain. A Laminin IV type A 2 domain is found at V1170 to N1361. One can recognise a Laminin EGF-like 14; second part domain in the interval C1362 to P1402. Intrachain disulfides connect C1403–C1412, C1405–C1419, C1422–C1431, C1434–C1449, C1452–C1466, C1454–C1476, C1479–C1488, C1491–C1506, C1509–C1521, C1511–C1528, C1530–C1539, and C1542–C1553. 3 consecutive Laminin EGF-like domains span residues C1403–L1451, C1452–K1508, and C1509–S1555. Positions C1556–I2116 are domain II and I. Residues N1579, N1689, N1717, N2047, and N2243 are each glycosylated (N-linked (GlcNAc...) asparagine). The stretch at M1706–L1783 forms a coiled coil. 5 consecutive Laminin G-like domains span residues K2117–C2297, D2305–C2481, I2486–C2673, A2713–C2885, and Q2890–C3070. Disulfide bonds link C2271–C2297 and C2457–C2481. Residues R2534–D2536 carry the Cell attachment site motif. 3 disulfides stabilise this stretch: C2646/C2673, C2860/C2885, and C3039/C3070.

Laminin is a complex glycoprotein, consisting of three different polypeptide chains (alpha, beta, gamma), which are bound to each other by disulfide bonds into a cross-shaped molecule comprising one long and three short arms with globules at each end. Alpha-1 is a subunit of laminin-1 (laminin-111 or EHS laminin) and laminin-3 (laminin-121 or S-laminin). Post-translationally, tyrosine phosphorylated by PKDCC/VLK.

The protein resides in the secreted. The protein localises to the extracellular space. It localises to the extracellular matrix. It is found in the basement membrane. Binding to cells via a high affinity receptor, laminin is thought to mediate the attachment, migration and organization of cells into tissues during embryonic development by interacting with other extracellular matrix components. This chain is Laminin subunit alpha-1 (LAMA1), found in Homo sapiens (Human).